Reading from the N-terminus, the 120-residue chain is Large ribosomal subunit protein uL18 (120 aa).

This sequence belongs to the universal ribosomal protein uL18 family. As to quaternary structure, part of the 50S ribosomal subunit; part of the 5S rRNA/L5/L18/L25 subcomplex. Contacts the 5S and 23S rRNAs.

Its function is as follows. This is one of the proteins that bind and probably mediate the attachment of the 5S RNA into the large ribosomal subunit, where it forms part of the central protuberance. This Finegoldia magna (strain ATCC 29328 / DSM 20472 / WAL 2508) (Peptostreptococcus magnus) protein is Large ribosomal subunit protein uL18.